A 665-amino-acid chain; its full sequence is tRNA 5-methylaminomethyl-2-thiouridine biosynthesis bifunctional protein MnmC (665 aa).

The tract at residues 1–243 (MSQTSLHHAR…KREMLAGERA (243 aa)) is tRNA (mnm(5)s(2)U34)-methyltransferase. The interval 268–665 (IGGGIASAMT…RKLLKGKPLQ (398 aa)) is FAD-dependent cmnm(5)s(2)U34 oxidoreductase.

In the N-terminal section; belongs to the methyltransferase superfamily. tRNA (mnm(5)s(2)U34)-methyltransferase family. The protein in the C-terminal section; belongs to the DAO family. Requires FAD as cofactor.

The protein resides in the cytoplasm. The enzyme catalyses 5-aminomethyl-2-thiouridine(34) in tRNA + S-adenosyl-L-methionine = 5-methylaminomethyl-2-thiouridine(34) in tRNA + S-adenosyl-L-homocysteine + H(+). In terms of biological role, catalyzes the last two steps in the biosynthesis of 5-methylaminomethyl-2-thiouridine (mnm(5)s(2)U) at the wobble position (U34) in tRNA. Catalyzes the FAD-dependent demodification of cmnm(5)s(2)U34 to nm(5)s(2)U34, followed by the transfer of a methyl group from S-adenosyl-L-methionine to nm(5)s(2)U34, to form mnm(5)s(2)U34. The polypeptide is tRNA 5-methylaminomethyl-2-thiouridine biosynthesis bifunctional protein MnmC (Aeromonas hydrophila subsp. hydrophila (strain ATCC 7966 / DSM 30187 / BCRC 13018 / CCUG 14551 / JCM 1027 / KCTC 2358 / NCIMB 9240 / NCTC 8049)).